We begin with the raw amino-acid sequence, 688 residues long: PTS system glucoside-specific EIICBA component (688 aa).

Positions 3-427 (KKLFGQLQRI…FKLKTPGRED (425 aa)) constitute a PTS EIIC type-1 domain. Transmembrane regions (helical) follow at residues 12–32 (IGKA…LLAF), 81–101 (LGLA…YLIM), 137–157 (LVLG…MGAL), 182–202 (FVPI…SFAW), 223–243 (LTTF…LHHI), 284–304 (AFTT…AFAI), 315–335 (VVGG…ITEP), 340–360 (FLFV…TSFL), 364–384 (LLGV…ILYG), and 395–415 (LVIP…DFAI). One can recognise a PTS EIIB type-1 domain in the interval 438–519 (AKLPFDVLDA…AKIMSGEITK (82 aa)). Residue cysteine 460 is the Phosphocysteine intermediate; for EIIB activity of the active site. The PTS EIIA type-1 domain occupies 560-664 (DQVFAGKMMG…SIVTPMIITN (105 aa)). Histidine 612 serves as the catalytic Tele-phosphohistidine intermediate; for EIIA activity.

The protein localises to the cell membrane. Its function is as follows. The phosphoenolpyruvate-dependent sugar phosphotransferase system (sugar PTS), a major carbohydrate active -transport system, catalyzes the phosphorylation of incoming sugar substrates concomitantly with their translocation across the cell membrane. This system is involved in alpha- and beta-glucoside transport. This chain is PTS system glucoside-specific EIICBA component (glcB), found in Staphylococcus aureus (strain JH1).